Here is a 327-residue protein sequence, read N- to C-terminus: MAWWKAWVEQEGVSVKGSPHFNPDPDAETLYKAMKGIGTNEQAIIDVLTKRSNAQRQQIAKSFKAQFGKDLIETLKSELSGKFERLIIALMYPPYRYEAKELYDAMKGIGTKEGVIIEILASRTKNQLQEIMKAYEEDYGSNLEEDIKADTSGYLERILVCLLQGSRDDLSGYVDPGLALQDAQDLYAAGEKICGTDEMKFITILCTRSATHLMRVFEEYEKIANKSIEDSIKSETHGSLEEAMLTVVKCTRNLHGYFAERLYFAMKGAGTLDGTLIRNIVSRSEIDLNLIKNQFKKMYGKTLSSMIMEDTSGDYKNALLNLVGSDL.

4 Annexin repeats span residues 21–92 (FNPD…ALMY), 93–164 (PPYR…CLLQ), 177–249 (GLAL…TVVK), and 253–324 (NLHG…NLVG). 4 residues coordinate Ca(2+): Met266, Gly268, Gly270, and Asp310.

It belongs to the annexin family.

Its function is as follows. This protein is an anticoagulant protein that acts as an indirect inhibitor of the thromboplastin-specific complex, which is involved in the blood coagulation cascade. This chain is Annexin A8 (ANXA8), found in Bos taurus (Bovine).